We begin with the raw amino-acid sequence, 645 residues long: Rho GTPase-activating protein 25 (645 aa).

Positions 46 to 151 (RPIKMGWLKK…WVKFLRRVAG (106 aa)) constitute a PH domain. The Rho-GAP domain occupies 159–353 (QRLDETVAYE…MMIRDHEVLF (195 aa)). 2 disordered regions span residues 355 to 444 (KSKD…QTLP) and 469 to 550 (FWSP…EEEI). Residues Ser-362 and Ser-395 each carry the phosphoserine modification. Over residues 393 to 409 (TDSFSSMTSDSDTTSPT) the composition is skewed to low complexity. Thr-406 carries the post-translational modification Phosphothreonine. A compositionally biased stretch (basic and acidic residues) spans 420-431 (DSSKVPREKPGD). Residues 487–504 (SQDLRQLSDSQRTSTYDN) are compositionally biased toward polar residues. A Phosphoserine modification is found at Ser-536. Residues 541-644 (GKKNSGEEEI…VKSMKEPKTE (104 aa)) adopt a coiled-coil conformation.

Functionally, GTPase activator for the Rho-type GTPases by converting them to an inactive GDP-bound state. The sequence is that of Rho GTPase-activating protein 25 (ARHGAP25) from Homo sapiens (Human).